The primary structure comprises 346 residues: Biotin synthase (346 aa).

Positions 38 to 256 (RQVQVSTLLS…IAVARIMMPT (219 aa)) constitute a Radical SAM core domain. [4Fe-4S] cluster is bound by residues cysteine 53, cysteine 57, and cysteine 60. [2Fe-2S] cluster contacts are provided by cysteine 97, cysteine 128, cysteine 188, and arginine 260.

The protein belongs to the radical SAM superfamily. Biotin synthase family. Homodimer. [4Fe-4S] cluster is required as a cofactor. [2Fe-2S] cluster serves as cofactor.

The enzyme catalyses (4R,5S)-dethiobiotin + (sulfur carrier)-SH + 2 reduced [2Fe-2S]-[ferredoxin] + 2 S-adenosyl-L-methionine = (sulfur carrier)-H + biotin + 2 5'-deoxyadenosine + 2 L-methionine + 2 oxidized [2Fe-2S]-[ferredoxin]. It functions in the pathway cofactor biosynthesis; biotin biosynthesis; biotin from 7,8-diaminononanoate: step 2/2. In terms of biological role, catalyzes the conversion of dethiobiotin (DTB) to biotin by the insertion of a sulfur atom into dethiobiotin via a radical-based mechanism. The protein is Biotin synthase of Shigella flexneri serotype 5b (strain 8401).